The sequence spans 401 residues: Diphosphomevalonate decarboxylase (401 aa).

Ala-2 is modified (N-acetylalanine). Residues 24 to 27, Arg-79, 157 to 162, and Thr-213 contribute to the (R)-5-diphosphomevalonate site; these read YWGK and SGSACR. The segment at 382–401 is disordered; the sequence is VLDDPHHHLLGPDGLPQRDL.

This sequence belongs to the diphosphomevalonate decarboxylase family. As to quaternary structure, homodimer.

The protein localises to the cytoplasm. It catalyses the reaction (R)-5-diphosphomevalonate + ATP = isopentenyl diphosphate + ADP + phosphate + CO2. It functions in the pathway steroid biosynthesis; cholesterol biosynthesis. In terms of biological role, catalyzes the ATP dependent decarboxylation of (R)-5-diphosphomevalonate to form isopentenyl diphosphate (IPP). Functions in the mevalonate (MVA) pathway leading to isopentenyl diphosphate (IPP), a key precursor for the biosynthesis of isoprenoids and sterol synthesis. The polypeptide is Diphosphomevalonate decarboxylase (Mvd) (Rattus norvegicus (Rat)).